A 143-amino-acid polypeptide reads, in one-letter code: Large-conductance mechanosensitive channel (143 aa).

2 helical membrane passes run 16 to 36 (VIDL…VTAL) and 84 to 104 (INTV…VKLI).

This sequence belongs to the MscL family. Homopentamer.

It is found in the cell inner membrane. Its function is as follows. Channel that opens in response to stretch forces in the membrane lipid bilayer. May participate in the regulation of osmotic pressure changes within the cell. In Xanthomonas campestris pv. campestris (strain 8004), this protein is Large-conductance mechanosensitive channel.